The primary structure comprises 303 residues: Glutamyl-Q tRNA(Asp) synthetase (303 aa).

Residues 9 to 13 (RFAPS) and Glu45 each bind L-glutamate. A 'HIGH' region motif is present at residues 12–22 (PSPTGAMHLGN). Positions 100, 102, 125, and 129 each coordinate Zn(2+). L-glutamate is bound by residues Tyr184 and Arg202. Positions 240–244 (RLAKR) match the 'KMSKS' region motif. Lys243 contacts ATP.

The protein belongs to the class-I aminoacyl-tRNA synthetase family. GluQ subfamily. It depends on Zn(2+) as a cofactor.

Catalyzes the tRNA-independent activation of glutamate in presence of ATP and the subsequent transfer of glutamate onto a tRNA(Asp). Glutamate is transferred on the 2-amino-5-(4,5-dihydroxy-2-cyclopenten-1-yl) moiety of the queuosine in the wobble position of the QUC anticodon. The protein is Glutamyl-Q tRNA(Asp) synthetase of Deinococcus geothermalis (strain DSM 11300 / CIP 105573 / AG-3a).